The sequence spans 90 residues: Small ribosomal subunit protein uS19 (90 aa).

Belongs to the universal ribosomal protein uS19 family.

Functionally, protein S19 forms a complex with S13 that binds strongly to the 16S ribosomal RNA. This Clostridium beijerinckii (strain ATCC 51743 / NCIMB 8052) (Clostridium acetobutylicum) protein is Small ribosomal subunit protein uS19.